The primary structure comprises 525 residues: Delta(24)-sterol reductase homolog dhcr-24 (525 aa).

A run of 2 helical transmembrane segments spans residues 27-47 (WVFV…VFDF) and 214-234 (SLFF…AATI). An FAD-binding PCMH-type domain is found at 47–239 (FRNRIVHAVN…VAATIKIIPC (193 aa)).

The protein belongs to the FAD-binding oxidoreductase/transferase type 4 family. FAD is required as a cofactor.

The protein localises to the endoplasmic reticulum membrane. It is found in the golgi apparatus membrane. The catalysed reaction is cholesterol + NADP(+) = desmosterol + NADPH + H(+). The enzyme catalyses lanosterol + NADPH + H(+) = 24,25-dihydrolanosterol + NADP(+). It carries out the reaction 5alpha-cholest-8-en-3beta-ol + NADP(+) = zymosterol + NADPH + H(+). It functions in the pathway steroid biosynthesis; cholesterol biosynthesis. In terms of biological role, catalyzes the reduction of the delta-24 double bond of sterol intermediates during cholesterol biosynthesis. The sequence is that of Delta(24)-sterol reductase homolog dhcr-24 from Caenorhabditis elegans.